Reading from the N-terminus, the 112-residue chain is Prothymosin alpha (112 aa).

N-acetylmethionine is present on M1. Positions 1 to 112 (MSDAAVDTSS…KKQKKTDEDD (112 aa)) are disordered. S2 carries the N-acetylserine; in Prothymosin alpha, N-terminally processed modification. The residue at position 2 (S2) is a Phosphoserine. At T8 the chain carries Phosphothreonine. Phosphoserine occurs at positions 9 and 10. Residues T13 and T14 each carry the phosphothreonine modification. Residues 13–31 (TTKDLKEKKEVVEEAENGR) are compositionally biased toward basic and acidic residues. K15 carries the N6-acetyllysine; alternate modification. K15 bears the N6-succinyllysine; alternate mark. Residues 43–84 (ENGEQEADNEVDEEEEEGGEEEEEEEEGDGEEEDGDEDEEAE) are compositionally biased toward acidic residues. Basic and acidic residues predominate over residues 101–112 (ETKKQKKTDEDD). The residue at position 102 (T102) is a Phosphothreonine. At K103 the chain carries N6-acetyllysine; alternate. K103 participates in a covalent cross-link: Glycyl lysine isopeptide (Lys-Gly) (interchain with G-Cter in SUMO2); alternate. T108 is modified (phosphothreonine).

The protein belongs to the pro/parathymosin family. As to quaternary structure, interacts with NUPR1; regulates apoptotic process. Covalently linked to a small RNA of about 20 nucleotides.

The protein resides in the nucleus. Its function is as follows. Prothymosin alpha may mediate immune function by conferring resistance to certain opportunistic infections. The sequence is that of Prothymosin alpha (Ptma) from Rattus norvegicus (Rat).